Here is a 290-residue protein sequence, read N- to C-terminus: Acetyl-coenzyme A carboxylase carboxyl transferase subunit beta (290 aa).

The CoA carboxyltransferase N-terminal domain occupies 28–290 (IMTKCPKCKK…TGGDIEWLQD (263 aa)). 4 residues coordinate Zn(2+): Cys32, Cys35, Cys51, and Cys54. The segment at 32 to 54 (CPKCKKIMLTKELDKNMRVCMNC) adopts a C4-type zinc-finger fold.

The protein belongs to the AccD/PCCB family. Acetyl-CoA carboxylase is a heterohexamer composed of biotin carboxyl carrier protein (AccB), biotin carboxylase (AccC) and two subunits each of ACCase subunit alpha (AccA) and ACCase subunit beta (AccD). It depends on Zn(2+) as a cofactor.

Its subcellular location is the cytoplasm. It carries out the reaction N(6)-carboxybiotinyl-L-lysyl-[protein] + acetyl-CoA = N(6)-biotinyl-L-lysyl-[protein] + malonyl-CoA. The protein operates within lipid metabolism; malonyl-CoA biosynthesis; malonyl-CoA from acetyl-CoA: step 1/1. With respect to regulation, inhibited by pyrrolidine dione antibiotics moiramide B (CPD1) and CPD2. Component of the acetyl coenzyme A carboxylase (ACC) complex. Biotin carboxylase (BC) catalyzes the carboxylation of biotin on its carrier protein (BCCP) and then the CO(2) group is transferred by the transcarboxylase to acetyl-CoA to form malonyl-CoA. The polypeptide is Acetyl-coenzyme A carboxylase carboxyl transferase subunit beta (Bacillus subtilis (strain 168)).